A 68-amino-acid chain; its full sequence is ATP synthase F(0) complex subunit 8 (68 aa).

The chain crosses the membrane as a helical span at residues 8 to 24 (VWPTTITPMLLTLFLIT). K54 is modified (N6-acetyllysine; alternate). Position 54 is an N6-succinyllysine; alternate (K54). K57 bears the N6-acetyllysine mark.

The protein belongs to the ATPase protein 8 family. In terms of assembly, component of the ATP synthase complex composed at least of ATP5F1A/subunit alpha, ATP5F1B/subunit beta, ATP5MC1/subunit c (homooctomer), MT-ATP6/subunit a, MT-ATP8/subunit 8, ATP5ME/subunit e, ATP5MF/subunit f, ATP5MG/subunit g, ATP5MK/subunit k, ATP5MJ/subunit j, ATP5F1C/subunit gamma, ATP5F1D/subunit delta, ATP5F1E/subunit epsilon, ATP5PF/subunit F6, ATP5PB/subunit b, ATP5PD/subunit d, ATP5PO/subunit OSCP. ATP synthase complex consists of a soluble F(1) head domain (subunits alpha(3) and beta(3)) - the catalytic core - and a membrane F(0) domain - the membrane proton channel (subunits c, a, 8, e, f, g, k and j). These two domains are linked by a central stalk (subunits gamma, delta, and epsilon) rotating inside the F1 region and a stationary peripheral stalk (subunits F6, b, d, and OSCP). Interacts with PRICKLE3.

It is found in the mitochondrion membrane. Functionally, subunit 8, of the mitochondrial membrane ATP synthase complex (F(1)F(0) ATP synthase or Complex V) that produces ATP from ADP in the presence of a proton gradient across the membrane which is generated by electron transport complexes of the respiratory chain. ATP synthase complex consist of a soluble F(1) head domain - the catalytic core - and a membrane F(1) domain - the membrane proton channel. These two domains are linked by a central stalk rotating inside the F(1) region and a stationary peripheral stalk. During catalysis, ATP synthesis in the catalytic domain of F(1) is coupled via a rotary mechanism of the central stalk subunits to proton translocation. In vivo, can only synthesize ATP although its ATP hydrolase activity can be activated artificially in vitro. Part of the complex F(0) domain. This chain is ATP synthase F(0) complex subunit 8, found in Pan paniscus (Pygmy chimpanzee).